Reading from the N-terminus, the 384-residue chain is Cytochrome b (384 aa).

A run of 4 helical transmembrane segments spans residues 32–52, 76–98, 113–133, and 179–199; these read FGFL…FLAI, WLLR…IHIS, TWVV…MGYV, and FFSF…VHMA. His82 and His96 together coordinate heme b. His183 and His197 together coordinate heme b. His202 is an a ubiquinone binding site. The next 4 membrane-spanning stretches (helical) occupy residues 225–245, 289–309, 321–341, and 348–368; these read FIIK…LFVY, LGGV…PWIT, LYKK…WIGG, and YVVI…IFIP.

The protein belongs to the cytochrome b family. The main subunits of complex b-c1 are: cytochrome b, cytochrome c1 and the Rieske protein. It depends on heme b as a cofactor.

The protein resides in the mitochondrion inner membrane. Component of the ubiquinol-cytochrome c reductase complex (complex III or cytochrome b-c1 complex) that is part of the mitochondrial respiratory chain. The b-c1 complex mediates electron transfer from ubiquinol to cytochrome c. Contributes to the generation of a proton gradient across the mitochondrial membrane that is then used for ATP synthesis. This is Cytochrome b (MT-CYB) from Cyanidium caldarium (Red alga).